Consider the following 795-residue polypeptide: Lon protease (795 aa).

The 193-residue stretch at 11 to 203 (GRVIPVSDIV…KFIDYLLKQK (193 aa)) folds into the Lon N-terminal domain. 356–363 (GPPGVGKT) contributes to the ATP binding site. The Lon proteolytic domain occupies 593–771 (DNVPGVVTGL…EDVLRETLGI (179 aa)). Residues serine 677 and lysine 720 contribute to the active site.

Belongs to the peptidase S16 family. As to quaternary structure, homohexamer. Organized in a ring with a central cavity.

It localises to the cytoplasm. It catalyses the reaction Hydrolysis of proteins in presence of ATP.. In terms of biological role, ATP-dependent serine protease that mediates the selective degradation of mutant and abnormal proteins as well as certain short-lived regulatory proteins. Required for cellular homeostasis and for survival from DNA damage and developmental changes induced by stress. Degrades polypeptides processively to yield small peptide fragments that are 5 to 10 amino acids long. Binds to DNA in a double-stranded, site-specific manner. The protein is Lon protease of Clostridium beijerinckii (strain ATCC 51743 / NCIMB 8052) (Clostridium acetobutylicum).